The primary structure comprises 368 residues: Dual-specificity RNA methyltransferase RlmN (368 aa).

Glu94 acts as the Proton acceptor in catalysis. The region spanning 100–334 (EEDRATLCVS…VIVRKTRGDD (235 aa)) is the Radical SAM core domain. An intrachain disulfide couples Cys107 to Cys339. [4Fe-4S] cluster-binding residues include Cys114, Cys118, and Cys121. Residues 163–164 (GE), Ser195, 217–219 (SLH), and Asn296 contribute to the S-adenosyl-L-methionine site. Catalysis depends on Cys339, which acts as the S-methylcysteine intermediate.

The protein belongs to the radical SAM superfamily. RlmN family. [4Fe-4S] cluster is required as a cofactor.

It localises to the cytoplasm. It catalyses the reaction adenosine(2503) in 23S rRNA + 2 reduced [2Fe-2S]-[ferredoxin] + 2 S-adenosyl-L-methionine = 2-methyladenosine(2503) in 23S rRNA + 5'-deoxyadenosine + L-methionine + 2 oxidized [2Fe-2S]-[ferredoxin] + S-adenosyl-L-homocysteine. The enzyme catalyses adenosine(37) in tRNA + 2 reduced [2Fe-2S]-[ferredoxin] + 2 S-adenosyl-L-methionine = 2-methyladenosine(37) in tRNA + 5'-deoxyadenosine + L-methionine + 2 oxidized [2Fe-2S]-[ferredoxin] + S-adenosyl-L-homocysteine. Functionally, specifically methylates position 2 of adenine 2503 in 23S rRNA and position 2 of adenine 37 in tRNAs. m2A2503 modification seems to play a crucial role in the proofreading step occurring at the peptidyl transferase center and thus would serve to optimize ribosomal fidelity. This is Dual-specificity RNA methyltransferase RlmN from Aeromonas salmonicida (strain A449).